Reading from the N-terminus, the 553-residue chain is ATP synthase subunit alpha (553 aa).

173 to 180 (GDRQTGKT) serves as a coordination point for ATP. The tract at residues 527–553 (EALDPSAVEREEIAVHHRKPSDETAGH) is disordered. The span at 533–553 (AVEREEIAVHHRKPSDETAGH) shows a compositional bias: basic and acidic residues.

The protein belongs to the ATPase alpha/beta chains family. In terms of assembly, F-type ATPases have 2 components, CF(1) - the catalytic core - and CF(0) - the membrane proton channel. CF(1) has five subunits: alpha(3), beta(3), gamma(1), delta(1), epsilon(1). CF(0) has three main subunits: a(1), b(2) and c(9-12). The alpha and beta chains form an alternating ring which encloses part of the gamma chain. CF(1) is attached to CF(0) by a central stalk formed by the gamma and epsilon chains, while a peripheral stalk is formed by the delta and b chains.

The protein localises to the cell membrane. The catalysed reaction is ATP + H2O + 4 H(+)(in) = ADP + phosphate + 5 H(+)(out). Functionally, produces ATP from ADP in the presence of a proton gradient across the membrane. The alpha chain is a regulatory subunit. The polypeptide is ATP synthase subunit alpha (Parafrankia sp. (strain EAN1pec)).